The following is a 356-amino-acid chain: tRNA N6-adenosine threonylcarbamoyltransferase (356 aa).

2 residues coordinate Fe cation: His115 and His119. Residues 138-142 (LVSGG), Asp171, Gly184, and Asn283 contribute to the substrate site. Asp311 is a Fe cation binding site.

This sequence belongs to the KAE1 / TsaD family. Fe(2+) is required as a cofactor.

The protein resides in the cytoplasm. It carries out the reaction L-threonylcarbamoyladenylate + adenosine(37) in tRNA = N(6)-L-threonylcarbamoyladenosine(37) in tRNA + AMP + H(+). In terms of biological role, required for the formation of a threonylcarbamoyl group on adenosine at position 37 (t(6)A37) in tRNAs that read codons beginning with adenine. Is involved in the transfer of the threonylcarbamoyl moiety of threonylcarbamoyl-AMP (TC-AMP) to the N6 group of A37, together with TsaE and TsaB. TsaD likely plays a direct catalytic role in this reaction. This is tRNA N6-adenosine threonylcarbamoyltransferase from Prochlorococcus marinus subsp. pastoris (strain CCMP1986 / NIES-2087 / MED4).